Here is a 528-residue protein sequence, read N- to C-terminus: ATP synthase subunit alpha 1 (528 aa).

Position 169–176 (169–176) interacts with ATP; that stretch reads GDRQTGKT.

Belongs to the ATPase alpha/beta chains family. As to quaternary structure, F-type ATPases have 2 components, CF(1) - the catalytic core - and CF(0) - the membrane proton channel. CF(1) has five subunits: alpha(3), beta(3), gamma(1), delta(1), epsilon(1). CF(0) has three main subunits: a(1), b(2) and c(9-12). The alpha and beta chains form an alternating ring which encloses part of the gamma chain. CF(1) is attached to CF(0) by a central stalk formed by the gamma and epsilon chains, while a peripheral stalk is formed by the delta and b chains.

It is found in the cell membrane. The enzyme catalyses ATP + H2O + 4 H(+)(in) = ADP + phosphate + 5 H(+)(out). Functionally, produces ATP from ADP in the presence of a proton gradient across the membrane. The alpha chain is a regulatory subunit. This Mycoplasmopsis pulmonis (strain UAB CTIP) (Mycoplasma pulmonis) protein is ATP synthase subunit alpha 1.